A 470-amino-acid polypeptide reads, in one-letter code: 3-isopropylmalate dehydratase large subunit (470 aa).

[4Fe-4S] cluster-binding residues include cysteine 349, cysteine 409, and cysteine 412.

This sequence belongs to the aconitase/IPM isomerase family. LeuC type 1 subfamily. Heterodimer of LeuC and LeuD. It depends on [4Fe-4S] cluster as a cofactor.

It catalyses the reaction (2R,3S)-3-isopropylmalate = (2S)-2-isopropylmalate. Its pathway is amino-acid biosynthesis; L-leucine biosynthesis; L-leucine from 3-methyl-2-oxobutanoate: step 2/4. Catalyzes the isomerization between 2-isopropylmalate and 3-isopropylmalate, via the formation of 2-isopropylmaleate. In Campylobacter jejuni subsp. jejuni serotype O:2 (strain ATCC 700819 / NCTC 11168), this protein is 3-isopropylmalate dehydratase large subunit.